Here is a 308-residue protein sequence, read N- to C-terminus: CD276 antigen homolog (308 aa).

A signal peptide spans 1 to 15 (MAALCLLLLLSLAEA). Residues 16-236 (IDLRVPELPV…VTGQHLSFPP (221 aa)) are Extracellular-facing. The Ig-like V-type domain maps to 21–125 (PELPVIGLLD…VQNSSSASVS (105 aa)). 2 cysteine pairs are disulfide-bonded: Cys-37/Cys-112 and Cys-155/Cys-210. The 94-residue stretch at 135–228 (PTLHLEPSEA…DVTHASLTVT (94 aa)) folds into the Ig-like C2-type domain. Residues 237-257 (LVLWVTVGLSICLLCLLVALA) traverse the membrane as a helical segment. The Cytoplasmic segment spans residues 258–308 (CVCRKHLKQTCEEEQENAGNEEHEENGELKTAMQPLKVTSPGEDDDAECLE). The segment at 270-308 (EEQENAGNEEHEENGELKTAMQPLKVTSPGEDDDAECLE) is disordered. Over residues 299-308 (GEDDDAECLE) the composition is skewed to acidic residues.

Belongs to the immunoglobulin superfamily. BTN/MOG family.

The protein localises to the membrane. In terms of biological role, modulates immune responses. The protein is CD276 antigen homolog (cd276) of Xenopus laevis (African clawed frog).